The following is a 980-amino-acid chain: Serine/threonine-protein phosphatase 4 regulatory subunit 3 (980 aa).

One can recognise a WH1 domain in the interval 1-105; it reads MTTDTRRRVK…EKICQVQGKD (105 aa). 3 disordered regions span residues 640 to 668, 695 to 861, and 885 to 980; these read RDKMENRTDGGLPIIRSGGRFRRDQRQME, VSEK…SLCD, and VTAA…ARQA. Positions 695 to 708 are enriched in polar residues; the sequence is VSEKNGPQTQNQQK. Low complexity-rich tracts occupy residues 709-749, 757-789, 803-859, and 885-926; these read SSPP…SSSP, QTQAAVHLAAAALQHHQQQQQQQQQNPFQQQTQ, EAPQ…AASL, and VTAA…SPAS. The span at 929-939 shows a compositional bias: polar residues; that stretch reads QDANSTEGTSS. Positions 940-951 are enriched in basic and acidic residues; the sequence is EADKTTAKKGLV. A compositionally biased stretch (acidic residues) spans 953–968; sequence YESDSGEDDYEEDEYS.

It belongs to the SMEK family. Serine/threonine-protein phosphatase 4 (PP4) occurs in different assemblies of the catalytic and one or more regulatory subunits. Probably part of a PP4 PPP4C-PPP4R2-PPP4R3 complex containing Pp4-19C, PPP4R2r and flfl. Interacts with mira. Expressed in neuroblasts.

Its subcellular location is the nucleus. It is found in the membrane. The protein localises to the cytoplasm. In terms of biological role, regulatory subunit of serine/threonine-protein phosphatase 4. The probable PP4 complex Pp4-19C-PPP4R2r-flfl (PPP4C-PPP4R2-PPP4R3) is required to prevent caspase induced cell death (in vitro). May be involved in DNA damage repair. Key mediator specific for the localization of mira and associated cell fate determinants during both interphase and mitosis. Nuclear Flfl is required to exclude mira/pros from the nucleus when inefficiently bound to the cytoskeleton/cortex, whereas cytosolic or membrane-associated flfl is required for the cortical association and asymmetric localization of mira/pros/brat/stau at metaphase and anaphase. The chain is Serine/threonine-protein phosphatase 4 regulatory subunit 3 (flfl) from Drosophila melanogaster (Fruit fly).